The sequence spans 368 residues: Agmatine deiminase (368 aa).

Cys-357 acts as the Amidino-cysteine intermediate in catalysis.

This sequence belongs to the agmatine deiminase family. As to quaternary structure, homodimer.

It carries out the reaction agmatine + H2O = N-carbamoylputrescine + NH4(+). Its pathway is amine and polyamine biosynthesis; putrescine biosynthesis via agmatine pathway; N-carbamoylputrescine from agmatine: step 1/1. Mediates the hydrolysis of agmatine into N-carbamoylputrescine in the arginine decarboxylase (ADC) pathway of putrescine biosynthesis, a basic polyamine. The sequence is that of Agmatine deiminase from Stutzerimonas stutzeri (strain A1501) (Pseudomonas stutzeri).